The chain runs to 90 residues: Lectin-1 (90 aa).

At Gln-1 the chain carries Pyrrolidone carboxylic acid. Residues Cys-46 and Cys-71 are joined by a disulfide bond.

Post-translationally, the N-terminus is blocked. In terms of processing, contains seven disulfide bonds. Proteolytically cleaved. Major form may consist of cleaved, disulfide-bonded subunits.

In terms of biological role, lectin with specificity for complex N-linked glycans and O-linked glycans. Has hemagglutinating activity towards rabbit erythrocytes that is inhibited by N-acetyl-D-galactosamine. The chain is Lectin-1 from Hypnea cervicornis (Brazilian red alga).